The chain runs to 237 residues: Methylosome subunit pICln (237 aa).

N-acetylserine is present on S2. S102, S144, S193, and S195 each carry phosphoserine. Position 223 is a phosphothreonine (T223).

This sequence belongs to the pICln (TC 1.A.47) family. In terms of assembly, component of the methylosome, a 20S complex containing at least PRMT5/SKB1, WDR77/MEP50 and CLNS1A/pICln. May mediate SNRPD1 and SNRPD3 methylation. Forms a 6S pICln-Sm complex composed of CLNS1A/pICln, SNRPD1, SNRPD2, SNRPE, SNRPF and SNRPG; ring-like structure where CLNS1A/pICln mimics additional Sm proteins and which is unable to assemble into the core snRNP. Interacts with LSM10 and LSM11.

It localises to the cytoplasm. It is found in the cytosol. The protein localises to the nucleus. Its subcellular location is the cytoskeleton. Involved in both the assembly of spliceosomal snRNPs and the methylation of Sm proteins. Chaperone that regulates the assembly of spliceosomal U1, U2, U4 and U5 small nuclear ribonucleoproteins (snRNPs), the building blocks of the spliceosome, and thereby plays an important role in the splicing of cellular pre-mRNAs. Most spliceosomal snRNPs contain a common set of Sm proteins SNRPB, SNRPD1, SNRPD2, SNRPD3, SNRPE, SNRPF and SNRPG that assemble in a heptameric protein ring on the Sm site of the small nuclear RNA to form the core snRNP (Sm core). In the cytosol, the Sm proteins SNRPD1, SNRPD2, SNRPE, SNRPF and SNRPG are trapped in an inactive 6S pICln-Sm complex by the chaperone CLNS1A that controls the assembly of the core snRNP. Dissociation by the SMN complex of CLNS1A from the trapped Sm proteins and their transfer to an SMN-Sm complex triggers the assembly of core snRNPs and their transport to the nucleus. The chain is Methylosome subunit pICln (CLNS1A) from Pongo abelii (Sumatran orangutan).